The following is a 370-amino-acid chain: tRNA-specific 2-thiouridylase MnmA (370 aa).

Residues 11 to 18 (GMSGGVDS) and Met37 contribute to the ATP site. The tract at residues 97–99 (NPD) is interaction with target base in tRNA. Cys102 serves as the catalytic Nucleophile. The cysteines at positions 102 and 199 are disulfide-linked. Residue Gly126 participates in ATP binding. The interaction with tRNA stretch occupies residues 149–151 (KDQ). Cys199 acts as the Cysteine persulfide intermediate in catalysis. The interval 307–308 (RY) is interaction with tRNA.

The protein belongs to the MnmA/TRMU family.

The protein localises to the cytoplasm. The enzyme catalyses S-sulfanyl-L-cysteinyl-[protein] + uridine(34) in tRNA + AH2 + ATP = 2-thiouridine(34) in tRNA + L-cysteinyl-[protein] + A + AMP + diphosphate + H(+). Its function is as follows. Catalyzes the 2-thiolation of uridine at the wobble position (U34) of tRNA, leading to the formation of s(2)U34. The chain is tRNA-specific 2-thiouridylase MnmA from Staphylococcus saprophyticus subsp. saprophyticus (strain ATCC 15305 / DSM 20229 / NCIMB 8711 / NCTC 7292 / S-41).